A 121-amino-acid polypeptide reads, in one-letter code: Spermidine export protein MdtJ (121 aa).

The next 4 helical transmembrane spans lie at 1–21 (MYIY…GTLS), 32–52 (GGFI…SFAV), 55–75 (IALG…ITLF), and 82–102 (ESLS…IVLI).

The protein belongs to the drug/metabolite transporter (DMT) superfamily. Small multidrug resistance (SMR) (TC 2.A.7.1) family. MdtJ subfamily. As to quaternary structure, forms a complex with MdtI.

Its subcellular location is the cell inner membrane. Catalyzes the excretion of spermidine. In Escherichia coli O139:H28 (strain E24377A / ETEC), this protein is Spermidine export protein MdtJ.